A 160-amino-acid chain; its full sequence is MGIEGVLKKGFITTSADTVLNYMRTGSLWPVTFGLACCAVEMMHAGMARYDLDRFGIIFRPSPRQADLMIVAGTLTNKMASALRRVYDQLAEPRWVLSMGSCANGGGYYHYSYSVVRGADRVVPVDVYVPGCPPTAEALIYGLIQLQQKIKRTSTIARDE.

4 residues coordinate [4Fe-4S] cluster: Cys37, Cys38, Cys102, and Cys132.

The protein belongs to the complex I 20 kDa subunit family. NDH-1 is composed of 14 different subunits. Subunits NuoB, C, D, E, F, and G constitute the peripheral sector of the complex. It depends on [4Fe-4S] cluster as a cofactor.

It localises to the cell inner membrane. The catalysed reaction is a quinone + NADH + 5 H(+)(in) = a quinol + NAD(+) + 4 H(+)(out). Functionally, NDH-1 shuttles electrons from NADH, via FMN and iron-sulfur (Fe-S) centers, to quinones in the respiratory chain. Couples the redox reaction to proton translocation (for every two electrons transferred, four hydrogen ions are translocated across the cytoplasmic membrane), and thus conserves the redox energy in a proton gradient. This is NADH-quinone oxidoreductase subunit B from Neisseria meningitidis serogroup A / serotype 4A (strain DSM 15465 / Z2491).